The primary structure comprises 411 residues: 1-deoxy-D-xylulose 5-phosphate reductoisomerase (411 aa).

Residues threonine 11, glycine 12, serine 13, isoleucine 14, and asparagine 124 each contribute to the NADPH site. Position 125 (lysine 125) interacts with 1-deoxy-D-xylulose 5-phosphate. NADPH is bound at residue glutamate 126. Aspartate 150 contributes to the Mn(2+) binding site. 1-deoxy-D-xylulose 5-phosphate is bound by residues serine 151, glutamate 152, serine 186, and histidine 209. Glutamate 152 contributes to the Mn(2+) binding site. Glycine 215 contributes to the NADPH binding site. 1-deoxy-D-xylulose 5-phosphate-binding residues include serine 222, asparagine 227, lysine 228, and glutamate 231. Glutamate 231 serves as a coordination point for Mn(2+).

It belongs to the DXR family. It depends on Mg(2+) as a cofactor. Mn(2+) serves as cofactor.

It carries out the reaction 2-C-methyl-D-erythritol 4-phosphate + NADP(+) = 1-deoxy-D-xylulose 5-phosphate + NADPH + H(+). Its pathway is isoprenoid biosynthesis; isopentenyl diphosphate biosynthesis via DXP pathway; isopentenyl diphosphate from 1-deoxy-D-xylulose 5-phosphate: step 1/6. In terms of biological role, catalyzes the NADPH-dependent rearrangement and reduction of 1-deoxy-D-xylulose-5-phosphate (DXP) to 2-C-methyl-D-erythritol 4-phosphate (MEP). The polypeptide is 1-deoxy-D-xylulose 5-phosphate reductoisomerase (Psychrobacter sp. (strain PRwf-1)).